Reading from the N-terminus, the 215-residue chain is Cytochrome b6 (215 aa).

Residues 32 to 52 (IFYCLGGITLTCFLVQVATGF) form a helical membrane-spanning segment. Residue Cys-35 coordinates heme c. 2 residues coordinate heme b: His-86 and His-100. Transmembrane regions (helical) follow at residues 90 to 110 (ASMM…TGGF), 116 to 136 (LTWV…VTGY), and 186 to 206 (LHTF…FLMI). Positions 187 and 202 each coordinate heme b.

Belongs to the cytochrome b family. PetB subfamily. As to quaternary structure, the 4 large subunits of the cytochrome b6-f complex are cytochrome b6, subunit IV (17 kDa polypeptide, PetD), cytochrome f and the Rieske protein, while the 4 small subunits are PetG, PetL, PetM and PetN. The complex functions as a dimer. The cofactor is heme b. Requires heme c as cofactor.

The protein localises to the plastid. The protein resides in the chloroplast thylakoid membrane. Component of the cytochrome b6-f complex, which mediates electron transfer between photosystem II (PSII) and photosystem I (PSI), cyclic electron flow around PSI, and state transitions. This Ostreococcus tauri protein is Cytochrome b6.